The sequence spans 337 residues: Glyceraldehyde-3-phosphate dehydrogenase (337 aa).

NAD(+)-binding positions include 12–13 (RI), Asp34, and Lys79. D-glyceraldehyde 3-phosphate is bound by residues 150–152 (SCT), Thr181, 210–211 (TG), and Arg233. Cys151 serves as the catalytic Nucleophile. Asn315 is an NAD(+) binding site.

It belongs to the glyceraldehyde-3-phosphate dehydrogenase family. In terms of assembly, homotetramer.

It is found in the cytoplasm. It carries out the reaction D-glyceraldehyde 3-phosphate + phosphate + NAD(+) = (2R)-3-phospho-glyceroyl phosphate + NADH + H(+). The protein operates within carbohydrate degradation; glycolysis; pyruvate from D-glyceraldehyde 3-phosphate: step 1/5. The protein is Glyceraldehyde-3-phosphate dehydrogenase (GPD) of Schizophyllum commune (Split gill fungus).